Here is a 151-residue protein sequence, read N- to C-terminus: MTTNTHTLQIEEILELLPHRFPFLLVDRVLDFEEGRFLRAVKNVSVNESFFQGHFPGKPIFPGVLILEAMAQATGILAFKSVGKLEPGELYYFAGIDEARFKRPVVPGDQMIMEVTFEKTRRGLTRFKGVALVDGKVVCEATMMCARSREA.

His54 is an active-site residue.

This sequence belongs to the thioester dehydratase family. FabZ subfamily. As to quaternary structure, oligomer. Post-translationally, the N-terminus is blocked.

It localises to the cytoplasm. It carries out the reaction a (3R)-hydroxyacyl-[ACP] = a (2E)-enoyl-[ACP] + H2O. Its function is as follows. Involved in unsaturated fatty acids biosynthesis. Catalyzes the dehydration of short chain beta-hydroxyacyl-ACPs and long chain saturated and unsaturated beta-hydroxyacyl-ACPs. In Escherichia coli O9:H4 (strain HS), this protein is 3-hydroxyacyl-[acyl-carrier-protein] dehydratase FabZ.